Here is a 272-residue protein sequence, read N- to C-terminus: Tryptophan synthase alpha chain (272 aa).

Active-site proton acceptor residues include glutamate 49 and aspartate 60.

Belongs to the TrpA family. As to quaternary structure, tetramer of two alpha and two beta chains.

The catalysed reaction is (1S,2R)-1-C-(indol-3-yl)glycerol 3-phosphate + L-serine = D-glyceraldehyde 3-phosphate + L-tryptophan + H2O. Its pathway is amino-acid biosynthesis; L-tryptophan biosynthesis; L-tryptophan from chorismate: step 5/5. Functionally, the alpha subunit is responsible for the aldol cleavage of indoleglycerol phosphate to indole and glyceraldehyde 3-phosphate. This Hydrogenovibrio crunogenus (strain DSM 25203 / XCL-2) (Thiomicrospira crunogena) protein is Tryptophan synthase alpha chain.